A 185-amino-acid polypeptide reads, in one-letter code: Isopentenyl-diphosphate Delta-isomerase (185 aa).

Residues His27 and His34 each coordinate Mn(2+). The region spanning 32–168 (PLHLAFSCHL…PWAFSPWLTL (137 aa)) is the Nudix hydrolase domain. The active site involves Cys69. Position 69 (Cys69) interacts with Mg(2+). Position 71 (His71) interacts with Mn(2+). Glu89 contributes to the Mg(2+) binding site. Residues Glu118 and Glu120 each contribute to the Mn(2+) site. Glu120 is an active-site residue.

It belongs to the IPP isomerase type 1 family. It depends on Mg(2+) as a cofactor. Mn(2+) is required as a cofactor.

It localises to the cytoplasm. It carries out the reaction isopentenyl diphosphate = dimethylallyl diphosphate. It functions in the pathway isoprenoid biosynthesis; dimethylallyl diphosphate biosynthesis; dimethylallyl diphosphate from isopentenyl diphosphate: step 1/1. In terms of biological role, catalyzes the 1,3-allylic rearrangement of the homoallylic substrate isopentenyl (IPP) to its highly electrophilic allylic isomer, dimethylallyl diphosphate (DMAPP). This chain is Isopentenyl-diphosphate Delta-isomerase, found in Leifsonia xyli subsp. xyli (strain CTCB07).